The following is a 352-amino-acid chain: Peptide chain release factor 1 (352 aa).

N5-methylglutamine is present on Gln-229.

Belongs to the prokaryotic/mitochondrial release factor family. In terms of processing, methylated by PrmC. Methylation increases the termination efficiency of RF1.

Its subcellular location is the cytoplasm. Peptide chain release factor 1 directs the termination of translation in response to the peptide chain termination codons UAG and UAA. The sequence is that of Peptide chain release factor 1 from Granulibacter bethesdensis (strain ATCC BAA-1260 / CGDNIH1).